The primary structure comprises 460 residues: Cell death abnormality protein 8 (460 aa).

The Cytoplasmic segment spans residues 1–45 (MYLKKHESKLLLIPKNEDKEDAGIIAVLTDRVPSVLIVRWFDLFC). The helical transmembrane segment at 46–66 (FGFAMCSYVLDFFSDIGIAIF) threads the bilayer. Over 67-77 (HFWAGRHLSGA) the chain is Extracellular. Residues 78–98 (LVLTFALIPSVIINIISMVWM) traverse the membrane as a helical segment. The Cytoplasmic segment spans residues 99–123 (LDDEMHWKRRAHPRRTGTFELNQKR). Residues 124 to 144 (FISLGKMITLCIFQMGPLFWY) traverse the membrane as a helical segment. The Extracellular segment spans residues 145-219 (YKALYYGWMF…YYISGKYPYW (75 aa)). The helical transmembrane segment at 220–240 (LYFQAASLTLSIISISWSVVV) threads the bilayer. Topologically, residues 241–274 (QNRSLRMTRDDKVNIWPHEAVLQFCWRFLTILAR) are cytoplasmic. A helical membrane pass occupies residues 275 to 295 (IITLVAFVLLFGIYVVFLIFG). Over 296–320 (HLIVTLVHVIFLQALHIEACTHIEK) the chain is Extracellular. Residues 321–341 (LLLLINAMIHLFTPFNMAEGN) form a helical membrane-spanning segment. The Cytoplasmic segment spans residues 342-353 (TRYRYLVAYTVE). The chain crosses the membrane as a helical span at residues 354 to 374 (FIEMMIIFLLLPTPLDAFPLI). The Extracellular segment spans residues 375–378 (EKIR). Residues 379-399 (IGVPATFFIGIFIMLIYYKFF) form a helical membrane-spanning segment. The Cytoplasmic segment spans residues 400–460 (HPNRRQDLEA…SLLEEDECHN (61 aa)).

The protein belongs to the XK family. In terms of processing, cleavage by ced-3 activates ced-8 function in promoting phosphatidylserine exposure at the surface of apoptotic cells.

Its subcellular location is the cell membrane. In terms of biological role, acts downstream of ced-9 and caspase ced-3 to promote phosphatidylserine exposure on apoptotic cell surface, possibly by mediating phospholipid scrambling. Phosphatidylserine is a specific marker only present at the surface of apoptotic cells and acts as a specific signal for engulfment. Regulates apoptosis kinetics during embryonic development. Not required for engulfment of germ cell corpses. The sequence is that of Cell death abnormality protein 8 from Caenorhabditis briggsae.